We begin with the raw amino-acid sequence, 340 residues long: Anthranilate phosphoribosyltransferase (340 aa).

Residues Gly-80, 83–84 (GD), Thr-88, 90–93 (NIST), 108–116 (KHGNRAMSS), and Ser-120 each bind 5-phospho-alpha-D-ribose 1-diphosphate. Position 80 (Gly-80) interacts with anthranilate. Mg(2+) is bound at residue Ser-92. Asn-111 contributes to the anthranilate binding site. Residue Arg-166 participates in anthranilate binding. Residues Asp-225 and Glu-226 each coordinate Mg(2+).

The protein belongs to the anthranilate phosphoribosyltransferase family. Homodimer. The cofactor is Mg(2+).

The catalysed reaction is N-(5-phospho-beta-D-ribosyl)anthranilate + diphosphate = 5-phospho-alpha-D-ribose 1-diphosphate + anthranilate. It participates in amino-acid biosynthesis; L-tryptophan biosynthesis; L-tryptophan from chorismate: step 2/5. Catalyzes the transfer of the phosphoribosyl group of 5-phosphorylribose-1-pyrophosphate (PRPP) to anthranilate to yield N-(5'-phosphoribosyl)-anthranilate (PRA). The chain is Anthranilate phosphoribosyltransferase from Chloroflexus aggregans (strain MD-66 / DSM 9485).